Consider the following 466-residue polypeptide: Soluble pyridine nucleotide transhydrogenase (466 aa).

36–45 (ERYHNVGGGC) contributes to the FAD binding site.

Belongs to the class-I pyridine nucleotide-disulfide oxidoreductase family. The cofactor is FAD.

It localises to the cytoplasm. It catalyses the reaction NAD(+) + NADPH = NADH + NADP(+). Conversion of NADPH, generated by peripheral catabolic pathways, to NADH, which can enter the respiratory chain for energy generation. The protein is Soluble pyridine nucleotide transhydrogenase of Enterobacter sp. (strain 638).